The sequence spans 1514 residues: ABC transporter C family member 5 (1514 aa).

10 helical membrane passes run 16 to 36 (LLEL…LFAV), 76 to 96 (FGFN…VLVL), 111 to 131 (FVLC…FLVL), 142 to 162 (PFLV…TMYV), 177 to 197 (SHVV…FLAW), 312 to 332 (VFAG…SYFV), 334 to 354 (YLGG…IFFT), 421 to 441 (WYLH…AILY), 446 to 466 (IAAV…IPLA), and 533 to 553 (FIFW…SIFL). Positions 307-588 (AACNAVFAGL…FPDLVSMMAQ (282 aa)) constitute an ABC transmembrane type-1 1 domain. Positions 622-845 (IEIKDGVFCW…GTDFKALVSA (224 aa)) constitute an ABC transporter 1 domain. 657–664 (GTVGSGKS) contacts ATP. Residues 899 to 927 (ASDLKAIKEKKKKAKRSRKKQLVQEEERV) adopt a coiled-coil conformation. The next 6 helical transmembrane spans lie at 946 to 966 (GALI…QIAS), 986 to 1006 (PTLL…FIFV), 1078 to 1098 (IVAV…PVAV), 1117 to 1137 (IVSI…AGAA), 1155 to 1175 (LLDC…WLCL), and 1180 to 1200 (LSTL…HGTI). In terms of domain architecture, ABC transmembrane type-1 2 spans 949 to 1231 (IPLIILAQAA…WILSFCKLEN (283 aa)). The ABC transporter 2 domain occupies 1268–1502 (IELVDVKVRY…KSSMFLKLVT (235 aa)). Position 1302–1309 (1302–1309 (GRTGSGKS)) interacts with ATP.

The protein belongs to the ABC transporter superfamily. ABCC family. Conjugate transporter (TC 3.A.1.208) subfamily. Ubiquitous, mostly in vascular tissues and epidermis, including guard cells.

The protein resides in the membrane. The catalysed reaction is ATP + H2O + xenobioticSide 1 = ADP + phosphate + xenobioticSide 2.. With respect to regulation, (E(2)17G) transport activity in negatively regulated by organic anions such as oestradiol-3-sulfate, luteolin-7-O-diglucuronide-4'-O-glucuronide, glycocholate, vanadate and the sulfonylurea glibenclamide, and, to a lower extent, by bafilomycin A1, NH(4)Cl, GSH, GSSG and DNB-GS. Its function is as follows. Pump for glutathione S-conjugates. Involved in regulation of K(+) and Na(+) cell content. Mediates resistance to NaCl and Li(+), confers sensitivity to sulfonylurea drugs such as glibenclamide (inducer of stomatal opening), and required for stomatal opening regulation by auxin, abscisic acid (ABA) and external Ca(2+). Transports oestradiol-17-(beta-D-glucuronide) (E(2)17G). Involved in the root auxin content regulation that controls the transition from primary root elongation to lateral root formation. Plays a role in ABA-mediated germination inhibition. High-affinity inositol hexakisphosphate transporter that plays a role in guard cell signaling and phytic acid storage. Required for phytic acid accumulation in developing seeds. Phytic acid is the primary storage form of phosphorus in cereal grains and other plant seeds. This chain is ABC transporter C family member 5 (ABCC5), found in Arabidopsis thaliana (Mouse-ear cress).